The following is a 1099-amino-acid chain: Sterol regulatory element-binding protein 2 (1099 aa).

The interval 1-47 (MDASEFMDTMDPSLSELGDEFTLGDIDEMLQFVSNQVDFPDIFEDQM) is transcriptional activation (acidic). The Cytoplasmic portion of the chain corresponds to 1 to 461 (MDASEFMDTM…SCVGVMDRSR (461 aa)). Residues 65 to 107 (LTPPHTPVQTSSQTHTQTLTQAHTQTHTQTHTQTRTPPVLQPR) form a disordered region. Residues 71 to 100 (PVQTSSQTHTQTLTQAHTQTHTQTHTQTRT) show a composition bias toward low complexity. The region spanning 320-370 (ERRTTHNIIEKRYRSSINDKILELRDLVLGNDAKMHKSGVLRKAIDYIKYL) is the bHLH domain. Residues 370 to 391 (LQQVNHKLRQENLTLKMANQKN) are leucine-zipper. Residues 462-482 (LLLCALSFLCLSLNPLPSLLG) form a helical membrane-spanning segment. Residues 483–513 (AEAPAGSPEVAGHGPTRTLFSLPAQTQSFGA) lie on the Lumenal side of the membrane. The chain crosses the membrane as a helical span at residues 514 to 534 (WLWCVLPFLLVWVVSGVGVVW). Over 535–1099 (GCVRVLYLWE…LSGGTTIAAS (565 aa)) the chain is Cytoplasmic.

The protein belongs to the SREBP family. In terms of assembly, forms a tight complex with scap, the SCAP-SREBP complex, in the endoplasmic reticulum membrane. Homodimer; efficient DNA binding of the soluble transcription factor fragment requires dimerization with another bHLH protein. Processed in the Golgi apparatus, releasing the protein from the membrane. At low cholesterol the SCAP-SREBP complex is recruited into COPII vesicles for export from the endoplasmic reticulum. In the Golgi, complex SREBPs are cleaved sequentially by site-1 (mbtps1, S1P) and site-2 (mbtps2, S2P) protease. The first cleavage by site-1 protease occurs within the luminal loop, the second cleavage by site-2 protease occurs within the first transmembrane domain, releasing the transcription factor from the Golgi membrane.

Its subcellular location is the endoplasmic reticulum membrane. The protein resides in the golgi apparatus membrane. The protein localises to the cytoplasmic vesicle. It localises to the COPII-coated vesicle membrane. It is found in the nucleus. In terms of biological role, precursor of the transcription factor form (Processed sterol regulatory element-binding protein 2), which is embedded in the endoplasmic reticulum membrane. Low sterol concentrations promote processing of this form, releasing the transcription factor form that translocates into the nucleus and activates transcription of genes involved in cholesterol biosynthesis. Key transcription factor that regulates expression of genes involved in cholesterol biosynthesis. Binds to the sterol regulatory element 1 (SRE-1) (5'-ATCACCCCAC-3'). Has dual sequence specificity binding to both an E-box motif (5'-ATCACGTGA-3') and to SRE-1 (5'-ATCACCCCAC-3'). Regulates transcription of genes related to cholesterol synthesis pathway. Activated by mediated cholesterol efflux, transactivates NOTCH and promotes hematopoietic stem and progenitor cell emergence. The protein is Sterol regulatory element-binding protein 2 of Danio rerio (Zebrafish).